The sequence spans 203 residues: ATP-dependent Clp protease proteolytic subunit 2 (203 aa).

The active-site Nucleophile is the S100. Residue H125 is part of the active site.

The protein belongs to the peptidase S14 family. Fourteen ClpP subunits assemble into 2 heptameric rings which stack back to back to give a disk-like structure with a central cavity, resembling the structure of eukaryotic proteasomes.

Its subcellular location is the cytoplasm. The catalysed reaction is Hydrolysis of proteins to small peptides in the presence of ATP and magnesium. alpha-casein is the usual test substrate. In the absence of ATP, only oligopeptides shorter than five residues are hydrolyzed (such as succinyl-Leu-Tyr-|-NHMec, and Leu-Tyr-Leu-|-Tyr-Trp, in which cleavage of the -Tyr-|-Leu- and -Tyr-|-Trp bonds also occurs).. Functionally, cleaves peptides in various proteins in a process that requires ATP hydrolysis. Has a chymotrypsin-like activity. Plays a major role in the degradation of misfolded proteins. This chain is ATP-dependent Clp protease proteolytic subunit 2, found in Nocardia farcinica (strain IFM 10152).